The following is a 485-amino-acid chain: Probable cytosol aminopeptidase (485 aa).

Mn(2+) is bound by residues Lys251 and Asp256. The active site involves Lys263. Mn(2+)-binding residues include Asp274, Asp333, and Glu335. Residue Arg337 is part of the active site.

Belongs to the peptidase M17 family. It depends on Mn(2+) as a cofactor.

The protein localises to the cytoplasm. It catalyses the reaction Release of an N-terminal amino acid, Xaa-|-Yaa-, in which Xaa is preferably Leu, but may be other amino acids including Pro although not Arg or Lys, and Yaa may be Pro. Amino acid amides and methyl esters are also readily hydrolyzed, but rates on arylamides are exceedingly low.. The enzyme catalyses Release of an N-terminal amino acid, preferentially leucine, but not glutamic or aspartic acids.. Functionally, presumably involved in the processing and regular turnover of intracellular proteins. Catalyzes the removal of unsubstituted N-terminal amino acids from various peptides. This is Probable cytosol aminopeptidase from Brucella melitensis biotype 1 (strain ATCC 23456 / CCUG 17765 / NCTC 10094 / 16M).